The following is a 519-amino-acid chain: 2,3-bisphosphoglycerate-independent phosphoglycerate mutase (519 aa).

Residues Asp18 and Ser68 each coordinate Mn(2+). Ser68 (phosphoserine intermediate) is an active-site residue. Substrate is bound by residues His129, 159–160 (RD), Arg191, Arg197, 267–270 (RADR), and Lys341. Asp408, His412, Asp449, His450, and His468 together coordinate Mn(2+).

Belongs to the BPG-independent phosphoglycerate mutase family. In terms of assembly, monomer. The cofactor is Mn(2+).

It catalyses the reaction (2R)-2-phosphoglycerate = (2R)-3-phosphoglycerate. Its pathway is carbohydrate degradation; glycolysis; pyruvate from D-glyceraldehyde 3-phosphate: step 3/5. Its function is as follows. Catalyzes the interconversion of 2-phosphoglycerate and 3-phosphoglycerate. This is 2,3-bisphosphoglycerate-independent phosphoglycerate mutase from Coxiella burnetii (strain Dugway 5J108-111).